Reading from the N-terminus, the 258-residue chain is Shikimate dehydrogenase (NADP(+)) (258 aa).

Residues 14–16 (SES) and T61 contribute to the shikimate site. Catalysis depends on K65, which acts as the Proton acceptor. Shikimate contacts are provided by N86 and D101. NADP(+)-binding positions include 125–129 (GSGGS) and L211. Y213 lines the shikimate pocket. G234 lines the NADP(+) pocket.

This sequence belongs to the shikimate dehydrogenase family. In terms of assembly, homodimer.

It carries out the reaction shikimate + NADP(+) = 3-dehydroshikimate + NADPH + H(+). It participates in metabolic intermediate biosynthesis; chorismate biosynthesis; chorismate from D-erythrose 4-phosphate and phosphoenolpyruvate: step 4/7. In terms of biological role, involved in the biosynthesis of the chorismate, which leads to the biosynthesis of aromatic amino acids. Catalyzes the reversible NADPH linked reduction of 3-dehydroshikimate (DHSA) to yield shikimate (SA). The chain is Shikimate dehydrogenase (NADP(+)) from Clostridium botulinum (strain ATCC 19397 / Type A).